We begin with the raw amino-acid sequence, 89 residues long: ATP synthase subunit c (89 aa).

2 consecutive transmembrane segments (helical) span residues 3–23 (IILGFVALACGLIVGLGAIGA) and 53–73 (FILAGLIDAAFLIGVAIALMF).

It belongs to the ATPase C chain family. F-type ATPases have 2 components, F(1) - the catalytic core - and F(0) - the membrane proton channel. F(1) has five subunits: alpha(3), beta(3), gamma(1), delta(1), epsilon(1). F(0) has three main subunits: a(1), b(2) and c(10-14). The alpha and beta chains form an alternating ring which encloses part of the gamma chain. F(1) is attached to F(0) by a central stalk formed by the gamma and epsilon chains, while a peripheral stalk is formed by the delta and b chains.

Its subcellular location is the cell inner membrane. F(1)F(0) ATP synthase produces ATP from ADP in the presence of a proton or sodium gradient. F-type ATPases consist of two structural domains, F(1) containing the extramembraneous catalytic core and F(0) containing the membrane proton channel, linked together by a central stalk and a peripheral stalk. During catalysis, ATP synthesis in the catalytic domain of F(1) is coupled via a rotary mechanism of the central stalk subunits to proton translocation. In terms of biological role, key component of the F(0) channel; it plays a direct role in translocation across the membrane. A homomeric c-ring of between 10-14 subunits forms the central stalk rotor element with the F(1) delta and epsilon subunits. This Verminephrobacter eiseniae (strain EF01-2) protein is ATP synthase subunit c.